A 706-amino-acid polypeptide reads, in one-letter code: D-(-)-3-hydroxybutyrate oligomer hydrolase (706 aa).

The signal sequence occupies residues 1–27 (MTIIIAGKNTLTLTSLAAAVLALGACG). The Charge relay system role is filled by serine 311.

The protein belongs to the D-(-)-3-hydroxybutyrate oligomer hydrolase family.

The protein localises to the secreted. The enzyme catalyses (3R)-hydroxybutanoate dimer + H2O = 2 (R)-3-hydroxybutanoate + H(+). It functions in the pathway lipid metabolism; butanoate metabolism. In terms of biological role, participates in the degradation of poly-3-hydroxybutyrate (PHB). It works downstream of poly(3-hydroxybutyrate) depolymerase, hydrolyzing D(-)-3-hydroxybutyrate oligomers of various length (3HB-oligomers) into 3HB-monomers. The protein is D-(-)-3-hydroxybutyrate oligomer hydrolase of Polaromonas naphthalenivorans (strain CJ2).